Reading from the N-terminus, the 70-residue chain is Beta-defensin 131B (70 aa).

The signal sequence occupies residues 1 to 22 (MRVLFFVFGVLSLMSTVPPTRS). 3 disulfides stabilise this stretch: C29–C56, C36–C50, and C40–C57.

The protein belongs to the beta-defensin family.

The protein resides in the secreted. Has antibacterial activity. This Homo sapiens (Human) protein is Beta-defensin 131B.